The primary structure comprises 142 residues: Transcription antitermination protein NusB (142 aa).

The protein belongs to the NusB family.

In terms of biological role, involved in transcription antitermination. Required for transcription of ribosomal RNA (rRNA) genes. Binds specifically to the boxA antiterminator sequence of the ribosomal RNA (rrn) operons. This is Transcription antitermination protein NusB from Levilactobacillus brevis (strain ATCC 367 / BCRC 12310 / CIP 105137 / JCM 1170 / LMG 11437 / NCIMB 947 / NCTC 947) (Lactobacillus brevis).